The sequence spans 142 residues: Hemoglobin subunit alpha-A (142 aa).

Residues 2 to 142 (VLSAADKNNV…VGTVLTAKYR (141 aa)) form the Globin domain. Histidine 59 contributes to the O2 binding site. Histidine 88 contacts heme b.

The protein belongs to the globin family. Heterotetramer of two alpha chains and two beta chains. Red blood cells.

Functionally, involved in oxygen transport from the lung to the various peripheral tissues. This Meleagris gallopavo (Wild turkey) protein is Hemoglobin subunit alpha-A (HBAA).